The chain runs to 501 residues: ATP synthase subunit alpha (501 aa).

169-176 (GDRQTGKT) provides a ligand contact to ATP.

The protein belongs to the ATPase alpha/beta chains family. In terms of assembly, F-type ATPases have 2 components, CF(1) - the catalytic core - and CF(0) - the membrane proton channel. CF(1) has five subunits: alpha(3), beta(3), gamma(1), delta(1), epsilon(1). CF(0) has three main subunits: a(1), b(2) and c(9-12). The alpha and beta chains form an alternating ring which encloses part of the gamma chain. CF(1) is attached to CF(0) by a central stalk formed by the gamma and epsilon chains, while a peripheral stalk is formed by the delta and b chains.

Its subcellular location is the cell inner membrane. It carries out the reaction ATP + H2O + 4 H(+)(in) = ADP + phosphate + 5 H(+)(out). Its function is as follows. Produces ATP from ADP in the presence of a proton gradient across the membrane. The alpha chain is a regulatory subunit. The polypeptide is ATP synthase subunit alpha (Campylobacter jejuni subsp. jejuni serotype O:6 (strain 81116 / NCTC 11828)).